The following is a 215-amino-acid chain: 3-demethoxyubiquinol 3-hydroxylase (215 aa).

Glutamate 64, glutamate 94, histidine 97, glutamate 146, glutamate 178, and histidine 181 together coordinate Fe cation.

The protein belongs to the COQ7 family. Requires Fe cation as cofactor.

The protein resides in the cell membrane. The catalysed reaction is a 5-methoxy-2-methyl-3-(all-trans-polyprenyl)benzene-1,4-diol + AH2 + O2 = a 3-demethylubiquinol + A + H2O. The protein operates within cofactor biosynthesis; ubiquinone biosynthesis. Functionally, catalyzes the hydroxylation of 2-nonaprenyl-3-methyl-6-methoxy-1,4-benzoquinol during ubiquinone biosynthesis. This chain is 3-demethoxyubiquinol 3-hydroxylase, found in Bordetella avium (strain 197N).